The primary structure comprises 463 residues: Asparagine--tRNA ligase (463 aa).

It belongs to the class-II aminoacyl-tRNA synthetase family. In terms of assembly, homodimer.

It is found in the cytoplasm. The catalysed reaction is tRNA(Asn) + L-asparagine + ATP = L-asparaginyl-tRNA(Asn) + AMP + diphosphate + H(+). In Clostridium acetobutylicum (strain ATCC 824 / DSM 792 / JCM 1419 / IAM 19013 / LMG 5710 / NBRC 13948 / NRRL B-527 / VKM B-1787 / 2291 / W), this protein is Asparagine--tRNA ligase.